The primary structure comprises 386 residues: D(1)-like dopamine receptor (386 aa).

Residues Met-1 to Thr-10 show a composition bias toward polar residues. The disordered stretch occupies residues Met-1–Arg-28. Residues Met-1–Arg-35 are Extracellular-facing. A helical membrane pass occupies residues Ala-36–Val-56. At Cys-57 to Asn-72 the chain is on the cytoplasmic side. Residues Ala-73–Trp-92 form a helical membrane-spanning segment. The Extracellular portion of the chain corresponds to Arg-93–Asp-109. The cysteines at positions 108 and 188 are disulfide-linked. The chain crosses the membrane as a helical span at residues Thr-110–Met-131. The Cytoplasmic segment spans residues Asp-132–Arg-150. The helical transmembrane segment at Phe-151–Trp-175 threads the bilayer. Topologically, residues His-176 to Thr-195 are extracellular. N-linked (GlcNAc...) asparagine glycans are attached at residues Asn-189 and Asn-193. The helical transmembrane segment at Tyr-196–Phe-220 threads the bilayer. Residues Arg-221 to Thr-266 are Cytoplasmic-facing. The chain crosses the membrane as a helical span at residues Leu-267–Arg-292. Residues Leu-293–Thr-305 lie on the Extracellular side of the membrane. Residues Phe-306 to Ala-325 form a helical membrane-spanning segment. Over Phe-326–Leu-386 the chain is Cytoplasmic.

It belongs to the G-protein coupled receptor 1 family.

The protein localises to the cell membrane. Its subcellular location is the cell projection. The protein resides in the cilium membrane. In terms of biological role, this is one of the five types (D1 to D5) of receptors for dopamine. The activity of this receptor is mediated by G proteins which activate adenylyl cyclase. This is D(1)-like dopamine receptor from Oreochromis mossambicus (Mozambique tilapia).